The primary structure comprises 286 residues: Bifunctional protein FolD (286 aa).

NADP(+) is bound by residues Gly168–Gly170, Thr195, and Val236.

Belongs to the tetrahydrofolate dehydrogenase/cyclohydrolase family. As to quaternary structure, homodimer.

It catalyses the reaction (6R)-5,10-methylene-5,6,7,8-tetrahydrofolate + NADP(+) = (6R)-5,10-methenyltetrahydrofolate + NADPH. The catalysed reaction is (6R)-5,10-methenyltetrahydrofolate + H2O = (6R)-10-formyltetrahydrofolate + H(+). Its pathway is one-carbon metabolism; tetrahydrofolate interconversion. Catalyzes the oxidation of 5,10-methylenetetrahydrofolate to 5,10-methenyltetrahydrofolate and then the hydrolysis of 5,10-methenyltetrahydrofolate to 10-formyltetrahydrofolate. The sequence is that of Bifunctional protein FolD from Mycolicibacterium fortuitum (Mycobacterium fortuitum).